We begin with the raw amino-acid sequence, 266 residues long: Translation initiation factor 2 subunit alpha (266 aa).

Residues 12 to 83 (GEILIATVKQ…RKGTVDVSLK (72 aa)) form the S1 motif domain.

This sequence belongs to the eIF-2-alpha family. As to quaternary structure, heterotrimer composed of an alpha, a beta and a gamma chain.

EIF-2 functions in the early steps of protein synthesis by forming a ternary complex with GTP and initiator tRNA. The polypeptide is Translation initiation factor 2 subunit alpha (Saccharolobus solfataricus (strain ATCC 35092 / DSM 1617 / JCM 11322 / P2) (Sulfolobus solfataricus)).